Reading from the N-terminus, the 156-residue chain is Small ribosomal subunit protein uS7 (156 aa).

It belongs to the universal ribosomal protein uS7 family. Part of the 30S ribosomal subunit. Contacts proteins S9 and S11.

Functionally, one of the primary rRNA binding proteins, it binds directly to 16S rRNA where it nucleates assembly of the head domain of the 30S subunit. Is located at the subunit interface close to the decoding center, probably blocks exit of the E-site tRNA. In Geobacillus stearothermophilus (Bacillus stearothermophilus), this protein is Small ribosomal subunit protein uS7 (rpsG).